Consider the following 386-residue polypeptide: Cytotoxic granule associated RNA binding protein TIA1 (386 aa).

M1 bears the N-acetylmethionine mark. RRM domains are found at residues 7–83 (KTLY…WATT), 106–184 (FHVF…WATR), and 214–286 (CTVY…WGKE). Residues 355 to 376 (GPNYSVPPPQGQNGSMLPSQPA) are disordered.

In terms of assembly, homooligomer; homooligomerization is induced by Zn(2+). Interacts with FASTK; the interactions leads to its phosphorylation. Interacts (via RRM1 and the C-terminal glutamine-rich (Q) sequence) with SNRPC/U1-C (via N-terminus); thereby facilitating spliceosomal U1 snRNP recruitment to 5' splice sites. Post-translationally, phosphorylatedby FASTK; phosphorylation occurs after FAS ligation in FAS-mediated apoptosis and before DNA fragmentation.

It localises to the nucleus. Its subcellular location is the cytoplasm. It is found in the stress granule. Functionally, RNA-binding protein involved in the regulation of alternative pre-RNA splicing and mRNA translation by binding to uridine-rich (U-rich) RNA sequences. Binds to U-rich sequences immediately downstream from a 5' splice sites in a uridine-rich small nuclear ribonucleoprotein (U snRNP)-dependent fashion, thereby modulating alternative pre-RNA splicing. Preferably binds to the U-rich IAS1 sequence in a U1 snRNP-dependent manner; this binding is optimal if a 5' splice site is adjacent to IAS1. Activates the use of heterologous 5' splice sites; the activation depends on the intron sequence downstream from the 5' splice site, with a preference for a downstream U-rich sequence. By interacting with SNRPC/U1-C, promotes recruitment and binding of spliceosomal U1 snRNP to 5' splice sites followed by U-rich sequences, thereby facilitating atypical 5' splice site recognition by U1 snRNP. Activates splicing of alternative exons with weak 5' splice sites followed by a U-rich stretch on its own pre-mRNA and on TIAR mRNA. Acts as a modulator of alternative splicing for the apoptotic FAS receptor, thereby promoting apoptosis. Binds to the 5' splice site region of FAS intron 5 to promote accumulation of transcripts that include exon 6 at the expense of transcripts in which exon 6 is skipped, thereby leading to the transcription of a membrane-bound apoptotic FAS receptor, which promotes apoptosis. Binds to a conserved AU-rich cis element in COL2A1 intron 2 and modulates alternative splicing of COL2A1 exon 2. Also binds to the equivalent AT-rich element in COL2A1 genomic DNA, and may thereby be involved in the regulation of transcription. Involved in the repression of mRNA translation by binding to AU-rich elements (AREs) located in mRNA 3' untranslated regions (3' UTRs), including target ARE-bearing mRNAs encoding TNF and PTGS2. Also participates in the cellular response to environmental stress, by acting downstream of the stress-induced phosphorylation of EIF2S1/EIF2A to promote the recruitment of untranslated mRNAs to cytoplasmic stress granules (SGs), leading to stress-induced translational arrest. Formation and recruitment to SGs is regulated by Zn(2+). Possesses nucleolytic activity against cytotoxic lymphocyte target cells. The chain is Cytotoxic granule associated RNA binding protein TIA1 (Tia1) from Mus musculus (Mouse).